The sequence spans 474 residues: Serine/threonine-protein kinase ksp1 (474 aa).

One can recognise a Protein kinase domain in the interval 9–280; the sequence is YKVERPLNKG…EAVLAVTKWT (272 aa). ATP is bound by residues 15–23 and lysine 43; that span reads LNKGSYGTV. The active-site Proton acceptor is aspartate 137. The interval 345–373 is disordered; that stretch reads VDENISTSSSPRSPASLAPVNNSERSYDS. Residues 350 to 363 show a composition bias toward low complexity; sequence STSSSPRSPASLAP. Residues serine 353, serine 354, serine 357, serine 378, serine 404, and serine 413 each carry the phosphoserine modification.

This sequence belongs to the protein kinase superfamily. Ser/Thr protein kinase family.

It is found in the cytoplasm. The protein localises to the nucleus. It catalyses the reaction L-seryl-[protein] + ATP = O-phospho-L-seryl-[protein] + ADP + H(+). The enzyme catalyses L-threonyl-[protein] + ATP = O-phospho-L-threonyl-[protein] + ADP + H(+). This is Serine/threonine-protein kinase ksp1 (ksp1) from Schizosaccharomyces pombe (strain 972 / ATCC 24843) (Fission yeast).